The following is a 475-amino-acid chain: Mitochondrial adenyl nucleotide antiporter SLC25A24 (475 aa).

A regulatory N-terminal domain region spans residues methionine 1–aspartate 173. The Mitochondrial intermembrane portion of the chain corresponds to methionine 1–glutamine 197. EF-hand domains lie at glutamate 19 to proline 54, leucine 55 to glutamate 88, aspartate 86 to threonine 121, and isoleucine 122 to alanine 157. Ca(2+) is bound by residues aspartate 32, asparagine 34, aspartate 36, valine 38, glutamate 43, aspartate 68, asparagine 70, aspartate 72, lysine 74, glutamate 79, aspartate 99, asparagine 101, aspartate 103, lysine 105, glutamate 110, aspartate 135, aspartate 137, threonine 139, threonine 141, and glutamate 146. Residues isoleucine 159–histidine 168 form a linker region region. Positions isoleucine 174–lysine 475 are C-terminal transmembrane transporter domain. Solcar repeat units lie at residues glycine 192–leucine 276, isoleucine 284–histidine 369, and proline 381–threonine 469. A helical membrane pass occupies residues leucine 198 to leucine 215. Topologically, residues aspartate 216 to arginine 250 are mitochondrial matrix. Residues glycine 251–tyrosine 270 traverse the membrane as a helical segment. Topologically, residues glutamate 271 to glycine 293 are mitochondrial intermembrane. A helical transmembrane segment spans residues serine 294–methionine 307. The Mitochondrial matrix segment spans residues glutamate 308 to lysine 343. Lysine 318 carries the N6-acetyllysine; alternate modification. The residue at position 318 (lysine 318) is an N6-succinyllysine; alternate. An N6-acetyllysine modification is found at lysine 334. Residues glycine 344–tyrosine 363 traverse the membrane as a helical segment. The Mitochondrial intermembrane portion of the chain corresponds to glutamate 364–leucine 386. Residues leucine 387–leucine 404 traverse the membrane as a helical segment. The Mitochondrial matrix portion of the chain corresponds to alanine 405–arginine 443. An N6-acetyllysine; alternate modification is found at lysine 435. An N6-succinyllysine; alternate modification is found at lysine 435. Residues glycine 444 to tyrosine 463 form a helical membrane-spanning segment. Residues glutamate 464 to lysine 475 are Mitochondrial intermembrane-facing.

The protein belongs to the mitochondrial carrier (TC 2.A.29) family. Monomer. Mainly expressed in colon. Also expressed in the small intestine proximal to the ileum. Weakly expressed in kidney but not in the liver.

Its subcellular location is the mitochondrion inner membrane. The protein resides in the peroxisome membrane. It catalyses the reaction Mg(2+)(out) + phosphate(in) + ATP(out) = Mg(2+)(in) + phosphate(out) + ATP(in). The catalysed reaction is ADP(out) + phosphate(in) + H(+)(out) = ADP(in) + phosphate(out) + H(+)(in). The enzyme catalyses AMP(out) + phosphate(in) = AMP(in) + phosphate(out). It carries out the reaction phosphate(in) + ATP(out) + 2 H(+)(out) = phosphate(out) + ATP(in) + 2 H(+)(in). It catalyses the reaction dADP(in) + ADP(out) = dADP(out) + ADP(in). The catalysed reaction is Mg(2+)(in) + ADP(out) + ATP(in) + H(+)(out) = Mg(2+)(out) + ADP(in) + ATP(out) + H(+)(in). The enzyme catalyses ADP(out) + diphosphate(in) = ADP(in) + diphosphate(out). It carries out the reaction dAMP(in) + ADP(out) + H(+)(out) = dAMP(out) + ADP(in) + H(+)(in). It catalyses the reaction 3'-AMP(in) + ADP(out) + H(+)(out) = 3'-AMP(out) + ADP(in) + H(+)(in). The catalysed reaction is dAMP(out) + phosphate(in) = dAMP(in) + phosphate(out). The enzyme catalyses 3'-AMP(out) + phosphate(in) = 3'-AMP(in) + phosphate(out). It carries out the reaction dADP(out) + phosphate(in) + H(+)(out) = dADP(in) + phosphate(out) + H(+)(in). With respect to regulation, activated by an increase in cytosolic calcium levels that induce a conformational change of the N-terminal regulatory domain, uncapping the channel and allowing transport. Inhibited by bathophenanthroline, mersalyl, p-hydroxymercuribenzoate, bromcresol purple and tannic acid. In terms of biological role, electroneutral antiporter that mediates the transport of adenyl nucleotides through the inner mitochondrial membrane. Originally identified as an ATP-magnesium/inorganic phosphate antiporter, it also acts as a broad specificity adenyl nucleotide antiporter. By regulating the mitochondrial matrix adenyl nucleotide pool could adapt to changing cellular energetic demands and indirectly regulate adenyl nucleotide-dependent metabolic pathways. In vitro, a low activity is also observed with guanyl and pyrimidine nucleotides. May play a role in protecting cells against oxidative stress-induced cell death, by buffering calcium levels in the mitochondrial matrix through the formation of calcium-phosphate precipitates. The chain is Mitochondrial adenyl nucleotide antiporter SLC25A24 (SLC25A24) from Oryctolagus cuniculus (Rabbit).